Here is a 440-residue protein sequence, read N- to C-terminus: Xaa-Pro dipeptidase (440 aa).

Aspartate 244, aspartate 255, histidine 335, glutamate 380, and glutamate 419 together coordinate Mn(2+).

The protein belongs to the peptidase M24B family. Bacterial-type prolidase subfamily. Requires Mn(2+) as cofactor.

It carries out the reaction Xaa-L-Pro dipeptide + H2O = an L-alpha-amino acid + L-proline. Splits dipeptides with a prolyl residue in the C-terminal position. The sequence is that of Xaa-Pro dipeptidase from Shewanella baltica (strain OS223).